The chain runs to 197 residues: Holliday junction branch migration complex subunit RuvA (197 aa).

The interval 1–63 is domain I; the sequence is MIALLNGQLI…EDALLLFGFL (63 aa). Residues 64 to 142 are domain II; that stretch reads TETEKDLFGL…PVQAVPGNAP (79 aa). The flexible linker stretch occupies residues 142–146; the sequence is PLPAE. The domain III stretch occupies residues 147–197; the sequence is TAGDLREDALSALVNLGYKENLSRKALDGIDTAPDAPLEDILKQALKLLMR.

It belongs to the RuvA family. Homotetramer. Forms an RuvA(8)-RuvB(12)-Holliday junction (HJ) complex. HJ DNA is sandwiched between 2 RuvA tetramers; dsDNA enters through RuvA and exits via RuvB. An RuvB hexamer assembles on each DNA strand where it exits the tetramer. Each RuvB hexamer is contacted by two RuvA subunits (via domain III) on 2 adjacent RuvB subunits; this complex drives branch migration. In the full resolvosome a probable DNA-RuvA(4)-RuvB(12)-RuvC(2) complex forms which resolves the HJ.

The protein localises to the cytoplasm. Its function is as follows. The RuvA-RuvB-RuvC complex processes Holliday junction (HJ) DNA during genetic recombination and DNA repair, while the RuvA-RuvB complex plays an important role in the rescue of blocked DNA replication forks via replication fork reversal (RFR). RuvA specifically binds to HJ cruciform DNA, conferring on it an open structure. The RuvB hexamer acts as an ATP-dependent pump, pulling dsDNA into and through the RuvAB complex. HJ branch migration allows RuvC to scan DNA until it finds its consensus sequence, where it cleaves and resolves the cruciform DNA. In Syntrophotalea carbinolica (strain DSM 2380 / NBRC 103641 / GraBd1) (Pelobacter carbinolicus), this protein is Holliday junction branch migration complex subunit RuvA.